The primary structure comprises 147 residues: Small ribosomal subunit protein bS6 (147 aa).

The tract at residues 114–147 (GKGTRAAEQAAAAEAAAPAAAPAEPASAEPAPAV) is disordered. Residues 119–147 (AAEQAAAAEAAAPAAAPAEPASAEPAPAV) are compositionally biased toward low complexity.

The protein belongs to the bacterial ribosomal protein bS6 family.

Its function is as follows. Binds together with bS18 to 16S ribosomal RNA. The sequence is that of Small ribosomal subunit protein bS6 from Koribacter versatilis (strain Ellin345).